A 337-amino-acid polypeptide reads, in one-letter code: Ral GTPase-activating protein subunit alpha-1 (337 aa).

Component of the heterodimeric RalGAP1 complex with RALGAPB. Heterodimerization is required for activity. Interacts with the HLH region of TCF3/isoform E12.

It is found in the cytoplasm. The protein localises to the nucleus. Functionally, catalytic subunit of the heterodimeric RalGAP1 complex which acts as a GTPase activator for the Ras-like small GTPases RALA and RALB. In Sus scrofa (Pig), this protein is Ral GTPase-activating protein subunit alpha-1.